Here is a 143-residue protein sequence, read N- to C-terminus: ATP synthase subunit b' (143 aa).

A helical transmembrane segment spans residues 6 to 26; sequence ATLPLMALQFVVLAFLLNAIF.

It belongs to the ATPase B chain family. In terms of assembly, F-type ATPases have 2 components, F(1) - the catalytic core - and F(0) - the membrane proton channel. F(1) has five subunits: alpha(3), beta(3), gamma(1), delta(1), epsilon(1). F(0) has four main subunits: a(1), b(1), b'(1) and c(10-14). The alpha and beta chains form an alternating ring which encloses part of the gamma chain. F(1) is attached to F(0) by a central stalk formed by the gamma and epsilon chains, while a peripheral stalk is formed by the delta, b and b' chains.

It is found in the cellular thylakoid membrane. In terms of biological role, f(1)F(0) ATP synthase produces ATP from ADP in the presence of a proton or sodium gradient. F-type ATPases consist of two structural domains, F(1) containing the extramembraneous catalytic core and F(0) containing the membrane proton channel, linked together by a central stalk and a peripheral stalk. During catalysis, ATP synthesis in the catalytic domain of F(1) is coupled via a rotary mechanism of the central stalk subunits to proton translocation. Component of the F(0) channel, it forms part of the peripheral stalk, linking F(1) to F(0). The b'-subunit is a diverged and duplicated form of b found in plants and photosynthetic bacteria. The sequence is that of ATP synthase subunit b' from Synechocystis sp. (strain ATCC 27184 / PCC 6803 / Kazusa).